The following is a 709-amino-acid chain: MPGIDKLPIEETLEDSPQTRSLLGVFEEDATAISNYMNQLYQAMHRIYDAQNELSAATHLTSKLLKEYEKQRFPLGGDDEVMSSTLQQFSKVIDELSSCHAVLSTQLADAMMFPITQFKERDLKEILTLKEVFQIASNDHDAAINRYSRLSKKRENDKVKYEVTEDVYTSRKKQHQTMMHYFCALNTLQYKKKIALLEPLLGYMQAQISFFKMGSENLNEQLEEFLANIGTSVQNVRREMDSDIETMQQTIEDLEVASDPLYVPDPDPTKFPVNRNLTRKAGYLNARNKTGLVSSTWDRQFYFTQGGNLMSQARGDVAGGLAMDIDNCSVMAVDCEDRRYCFQITSFDGKKSSILQAESKKDHEEWICTINNISKQIYLSENPEETAARVNQSALEAVTPSPSFQQRHESLRPAAGQSRPPTARTSSSGSLGSESTNLAALSLDSLVAPDTPIQFDIISPVCEDQPGQAKAFGQGGRRTNPFGESGGSTKSETEDSILHQLFIVRFLGSMEVKSDDHPDVVYETMRQILAARAIHNIFRMTESHLLVTCDCLKLIDPQTQVTRLTFPLPCVVLYATHQENKRLFGFVLRTSSGRSESNLSSVCYIFESNNEGEKICDSVGLAKQIALHAELDRRASEKQKEIERVKEKQQKELNKQKQIEKDLEEQSRLIAASSRPNQASSEGQFVVLSSSQSEESDLGEGGKKRESEA.

Residues M1–S428 form a required for RAB5A binding region. Positions G3–P268 constitute a BAR domain. Residues S215 to D259 are a coiled coil. Residues L277 to K375 enclose the PH domain. Disordered regions lie at residues A397–E434, G467–S491, and V645–A709. T399 bears the Phosphothreonine mark. S401 bears the Phosphoserine mark. Positions S403–A414 match the F&amp;H motif. The residue at position 410 (S410) is a Phosphoserine; by PKA. The PID domain maps to S496–Q656. A coiled-coil region spans residues L621–S673. Residues V645 to S667 are compositionally biased toward basic and acidic residues. The span at S674–S693 shows a compositional bias: polar residues. A phosphoserine mark is found at S693 and S696. Residues E700–A709 show a composition bias toward basic and acidic residues.

Homodimer. Binds RAB5A/Rab5 through an N-terminal domain. This interaction is essential for its recruitment to endosomal membranes as well as its role in cell proliferation. Binds DCC and the catalytic domain of the inactive form of AKT2 through its PID domain. Binds PIK3CA and subunits of the NuRD/MeCP1 complex. Interacts with OCRL and INPP5B. Interacts with NTRK2. Interacts with APPL2; interaction is independent of follicle stimulating hormone stimulation; interaction is decreased by adiponectin in a time-dependent manner. Forms a complex with APPL2 and RUVBL2. Forms a complex comprising APPL2, RUVBL2, CTNNB1, HDAC1 and HDAC2; interaction reduces interaction between CTNNB1, HDAC1, HDAC2 and RUVBL2 leading to the decrease of deacetylase activity of this complex; affects the recruitment of repressive complexes to the Wnt target genes. Interacts with ANXA2. Interacts with TGFBR1; interaction is TGF beta dependent; mediates trafficking of the TGFBR1 from the endosomes to the nucleus via microtubules in a TRAF6-dependent manner. Interacts with PRKCZ. Interacts with PIK3R1 and APPL2. Interacts with ADIPOR1; ADIPOQ enhances this interaction; inhibites adiponectin-stimulated binding of APPL2 to ADIPOR1. In terms of processing, phosphorylation at Ser-410 by PKA severely impairs binding to OCRL. In terms of tissue distribution, high levels in heart, ovary, pancreas and skeletal muscle.

The protein resides in the early endosome membrane. It is found in the nucleus. It localises to the cytoplasm. Its subcellular location is the endosome. The protein localises to the cell projection. The protein resides in the ruffle. It is found in the cytoplasmic vesicle. It localises to the phagosome. Its function is as follows. Multifunctional adapter protein that binds to various membrane receptors, nuclear factors and signaling proteins to regulate many processes, such as cell proliferation, immune response, endosomal trafficking and cell metabolism. Regulates signaling pathway leading to cell proliferation through interaction with RAB5A and subunits of the NuRD/MeCP1 complex. Functions as a positive regulator of innate immune response via activation of AKT1 signaling pathway by forming a complex with APPL1 and PIK3R1. Inhibits Fc-gamma receptor-mediated phagocytosis through PI3K/Akt signaling in macrophages. Regulates TLR4 signaling in activated macrophages. Involved in trafficking of the TGFBR1 from the endosomes to the nucleus via microtubules in a TRAF6-dependent manner. Plays a role in cell metabolism by regulating adiponecting and insulin signaling pathways. Required for fibroblast migration through HGF cell signaling. Positive regulator of beta-catenin/TCF-dependent transcription through direct interaction with RUVBL2/reptin resulting in the relief of RUVBL2-mediated repression of beta-catenin/TCF target genes by modulating the interactions within the beta-catenin-reptin-HDAC complex. This Homo sapiens (Human) protein is DCC-interacting protein 13-alpha.